We begin with the raw amino-acid sequence, 379 residues long: Wnt inhibitory factor 1 (379 aa).

The signal sequence occupies residues Met1–Ala28. A WIF domain is found at Leu38 to Cys177. A glycan (N-linked (GlcNAc...) asparagine) is linked at Asn88. 7 disulfides stabilise this stretch: Cys140/Cys177, Cys182/Cys192, Cys186/Cys198, Cys200/Cys209, Cys214/Cys224, Cys218/Cys230, and Cys232/Cys241. 5 EGF-like domains span residues Gln178–Glu210, Lys211–Asp242, Lys243–Glu271, Glu274–Ser306, and Lys307–Asn338. Asn245 carries an N-linked (GlcNAc...) asparagine glycan. 8 cysteine pairs are disulfide-bonded: Cys246–Cys256, Cys250–Cys262, Cys278–Cys288, Cys282–Cys294, Cys296–Cys305, Cys310–Cys320, Cys314–Cys326, and Cys328–Cys337. A disordered region spans residues Ala348 to Trp379. Over residues Leu356–Pro373 the composition is skewed to basic and acidic residues.

As to quaternary structure, interacts with MYOC. In terms of tissue distribution, expression highest in heart and lung. Lower in brain and eye.

It localises to the secreted. In terms of biological role, binds to WNT proteins and inhibits their activities. May be involved in mesoderm segmentation. This is Wnt inhibitory factor 1 (Wif1) from Mus musculus (Mouse).